The sequence spans 309 residues: Porphobilinogen deaminase (309 aa).

The residue at position 242 (cysteine 242) is an S-(dipyrrolylmethanemethyl)cysteine.

It belongs to the HMBS family. As to quaternary structure, monomer. Requires dipyrromethane as cofactor.

The catalysed reaction is 4 porphobilinogen + H2O = hydroxymethylbilane + 4 NH4(+). The protein operates within porphyrin-containing compound metabolism; protoporphyrin-IX biosynthesis; coproporphyrinogen-III from 5-aminolevulinate: step 2/4. Its function is as follows. Tetrapolymerization of the monopyrrole PBG into the hydroxymethylbilane pre-uroporphyrinogen in several discrete steps. The sequence is that of Porphobilinogen deaminase from Legionella pneumophila subsp. pneumophila (strain Philadelphia 1 / ATCC 33152 / DSM 7513).